The primary structure comprises 464 residues: Zinc transporter 6-A (464 aa).

Topologically, residues 1-33 are cytoplasmic; the sequence is MGTIYLFRKTQRSLLGKLAQEFRLVTADRRSWK. The helical transmembrane segment at 34–54 threads the bilayer; the sequence is ILLFGAINVVCTAFLLTWCSS. Over 55-64 the chain is Extracellular; sequence TNSMALTAYT. Residues 65-85 traverse the membrane as a helical segment; it reads YLTIFDLFSLITSLISYWVTM. At 86–98 the chain is on the cytoplasmic side; it reads KKPSPTYSFGFER. The helical transmembrane segment at 99–119 threads the bilayer; sequence FEVLAVFASTVLAQLGALFIL. At 120 to 134 the chain is on the extracellular side; it reads KESAERFIEQPEIHT. Residues 135–155 form a helical membrane-spanning segment; that stretch reads GRLLVGTFVALFFNLFTMLSI. The Cytoplasmic segment spans residues 156-200; that stretch reads RNKPFAYVSDAASTSWLQEHVADLSRSLCGIIPGLSSIFLPRMNP. The helical transmembrane segment at 201-221 threads the bilayer; sequence FVLIDIAGALALCITYMLIEI. Over 222–223 the chain is Extracellular; it reads NN. Residues 224 to 244 form a helical membrane-spanning segment; sequence YFAVDTASAVAIAVMTFGTMY. Residues 245-464 are Cytoplasmic-facing; sequence PMSVYSGKVL…TPGQFTQFRQ (220 aa).

This sequence belongs to the cation diffusion facilitator (CDF) transporter (TC 2.A.4) family. SLC30A subfamily. In terms of assembly, heterodimer with SLC30A5; form a functional zinc ion transmembrane transporter.

The protein localises to the golgi apparatus. It localises to the trans-Golgi network membrane. Has probably no intrinsic transporter activity but together with SLC30A5 forms a functional zinc ion:proton antiporter heterodimer, mediating zinc entry into the lumen of organelles along the secretory pathway. As part of that zinc ion:proton antiporter, contributes to zinc ion homeostasis within the early secretory pathway and regulates the activation and folding of enzymes like alkaline phosphatases and enzymes involved in phosphatidylinositol glycan anchor biosynthesis. The polypeptide is Zinc transporter 6-A (slc30a6-a) (Xenopus laevis (African clawed frog)).